We begin with the raw amino-acid sequence, 645 residues long: tRNA 5-methylaminomethyl-2-thiouridine biosynthesis bifunctional protein MnmC (645 aa).

Positions 1 to 230 (MPMSEPIDWL…KRHNLHAVFD (230 aa)) are tRNA (mnm(5)s(2)U34)-methyltransferase. The segment at 254–645 (LGAGIAGAAA…LASERLGRRR (392 aa)) is FAD-dependent cmnm(5)s(2)U34 oxidoreductase.

It in the N-terminal section; belongs to the methyltransferase superfamily. tRNA (mnm(5)s(2)U34)-methyltransferase family. The protein in the C-terminal section; belongs to the DAO family. It depends on FAD as a cofactor.

Its subcellular location is the cytoplasm. It carries out the reaction 5-aminomethyl-2-thiouridine(34) in tRNA + S-adenosyl-L-methionine = 5-methylaminomethyl-2-thiouridine(34) in tRNA + S-adenosyl-L-homocysteine + H(+). Functionally, catalyzes the last two steps in the biosynthesis of 5-methylaminomethyl-2-thiouridine (mnm(5)s(2)U) at the wobble position (U34) in tRNA. Catalyzes the FAD-dependent demodification of cmnm(5)s(2)U34 to nm(5)s(2)U34, followed by the transfer of a methyl group from S-adenosyl-L-methionine to nm(5)s(2)U34, to form mnm(5)s(2)U34. In Delftia acidovorans (strain DSM 14801 / SPH-1), this protein is tRNA 5-methylaminomethyl-2-thiouridine biosynthesis bifunctional protein MnmC.